A 440-amino-acid polypeptide reads, in one-letter code: Muscarinic acetylcholine receptor M2 (440 aa).

A helical membrane pass occupies residues 1–19 (VLVAGSLSLVTIIGNILVM). Over 20-33 (VSIKVNRHLQTVNN) the chain is Cytoplasmic. The chain crosses the membrane as a helical span at residues 34-54 (YFLFSLACADLIIGVFSMNLY). At 55 to 71 (TLYTVIGYWPLGPVVCD) the chain is on the extracellular side. Cysteine 70 and cysteine 150 are oxidised to a cystine. Residues 72 to 93 (LWLALDYVVSNASVMNLLIISF) traverse the membrane as a helical segment. The Important for signaling motif lies at 94 to 96 (DRY). Topologically, residues 94–113 (DRYFCVTKPLTYPVKRTTKM) are cytoplasmic. The chain crosses the membrane as a helical span at residues 114–136 (AGMMIAAAWVLSFILWAPAILFW). The Extracellular segment spans residues 137–158 (QFIVGVRTVEDGECYIQFFSNA). Residues 159–183 (AVTFGTAIAAFYLPVIIMTVLYWHI) form a helical membrane-spanning segment. Residues 184–361 (SRASKSRIKK…PPSREKKVTR (178 aa)) are Cytoplasmic-facing. The segment at 192–329 (KKDKKEPVAN…VVGSSGQNGD (138 aa)) is disordered. Serine 206 is modified (phosphoserine). Over residues 228–244 (GLEHNKIQNGKAPRDPV) the composition is skewed to basic and acidic residues. 3 stretches are compositionally biased toward polar residues: residues 258 to 267 (NDSTSVSAVA), 278 to 287 (DENTVSTSLG), and 308 to 327 (SDSCTPTNTTVEVVGSSGQN). Residues 362–384 (TILAILLAFIITWAPYNVMVLIN) traverse the membrane as a helical segment. At 385-392 (TFCAPCIP) the chain is on the extracellular side. A disulfide bridge links cysteine 387 with cysteine 390. The chain crosses the membrane as a helical span at residues 393–416 (NTVWTIGYWLCYINSTINPACYAL). The Important for signaling motif lies at 410 to 414 (NPACY). Over 417-440 (CNATFKKTFKHLLMCHYKNIGATR) the chain is Cytoplasmic. 3 positions are modified to phosphothreonine: threonine 420, threonine 424, and threonine 439.

The protein belongs to the G-protein coupled receptor 1 family. Muscarinic acetylcholine receptor subfamily. CHRM2 sub-subfamily. Interacts with ARRB1 and ARRB2. Interacts with RACK1; the interaction regulates CHRM2 internalization. Post-translationally, phosphorylated in response to agonist treatment.

The protein localises to the cell membrane. Its subcellular location is the postsynaptic cell membrane. The muscarinic acetylcholine receptor mediates various cellular responses, including inhibition of adenylate cyclase, breakdown of phosphoinositides and modulation of potassium channels through the action of G proteins. Primary transducing effect is adenylate cyclase inhibition. Signaling promotes phospholipase C activity, leading to the release of inositol trisphosphate (IP3); this then triggers calcium ion release into the cytosol. The protein is Muscarinic acetylcholine receptor M2 (CHRM2) of Pan troglodytes (Chimpanzee).